The following is a 205-amino-acid chain: MSIKYVATSKLPTPWGVFAMHGFEDSETGKEHVALTFGDLSGDAPVLGRIHSECLTGDALFSLRCDCGFQLQTAMQRIAETGRGFILYLRQEGRGIGLLNKIRAYELQDKGANTVEANEQLGFAADMRKYDMIAPMLAHLGISRVKLMTNNPRKVNAMKDVGMDVVERVPLQVGKNRYNEAYLKTKSDKLGHMMSEEHFKAQHQD.

49 to 53 provides a ligand contact to GTP; that stretch reads RIHSE. The Zn(2+) site is built by Cys-54, Cys-65, and Cys-67. Residues Gln-70, 92–94, and Thr-114 contribute to the GTP site; that span reads EGR. Asp-126 (proton acceptor) is an active-site residue. Residue Arg-128 is the Nucleophile of the active site. 2 residues coordinate GTP: Thr-149 and Lys-154.

The protein belongs to the GTP cyclohydrolase II family. Requires Zn(2+) as cofactor.

The catalysed reaction is GTP + 4 H2O = 2,5-diamino-6-hydroxy-4-(5-phosphoribosylamino)-pyrimidine + formate + 2 phosphate + 3 H(+). The protein operates within cofactor biosynthesis; riboflavin biosynthesis; 5-amino-6-(D-ribitylamino)uracil from GTP: step 1/4. In terms of biological role, catalyzes the conversion of GTP to 2,5-diamino-6-ribosylamino-4(3H)-pyrimidinone 5'-phosphate (DARP), formate and pyrophosphate. This is GTP cyclohydrolase-2 from Shewanella amazonensis (strain ATCC BAA-1098 / SB2B).